Consider the following 411-residue polypeptide: Serine--tRNA ligase (411 aa).

An L-serine-binding site is contributed by 226–228 (TSE). 257-259 (RKE) is an ATP binding site. Residue E280 coordinates L-serine. 344 to 347 (EISS) contacts ATP. S379 is an L-serine binding site.

Belongs to the class-II aminoacyl-tRNA synthetase family. Type-1 seryl-tRNA synthetase subfamily. Homodimer. The tRNA molecule binds across the dimer.

It localises to the cytoplasm. The catalysed reaction is tRNA(Ser) + L-serine + ATP = L-seryl-tRNA(Ser) + AMP + diphosphate + H(+). It carries out the reaction tRNA(Sec) + L-serine + ATP = L-seryl-tRNA(Sec) + AMP + diphosphate + H(+). Its pathway is aminoacyl-tRNA biosynthesis; selenocysteinyl-tRNA(Sec) biosynthesis; L-seryl-tRNA(Sec) from L-serine and tRNA(Sec): step 1/1. Its function is as follows. Catalyzes the attachment of serine to tRNA(Ser). Is also able to aminoacylate tRNA(Sec) with serine, to form the misacylated tRNA L-seryl-tRNA(Sec), which will be further converted into selenocysteinyl-tRNA(Sec). This Campylobacter jejuni subsp. jejuni serotype O:6 (strain 81116 / NCTC 11828) protein is Serine--tRNA ligase.